Here is a 224-residue protein sequence, read N- to C-terminus: Mammalian ependymin-related protein 1 (224 aa).

An N-terminal signal peptide occupies residues 1 to 37 (MPGRAPLRTVPGALGAWLLGGLWAWTLCGLCSLGAVG). 3 disulfide bridges follow: Cys-42–Cys-172, Cys-88–Cys-222, and Cys-113–Cys-210. N-linked (GlcNAc...) asparagine glycosylation is found at Asn-130 and Asn-182.

Belongs to the ependymin family. In terms of assembly, homodimer. In terms of processing, N-glycosylated; the glycan contains mannose-6-phosphate moieties. Ubiquitous. Detected in brain, heart, skeletal muscle, kidney, testis, ovary and prostate.

The protein localises to the lysosome lumen. Its subcellular location is the secreted. Binds anionic lipids and gangliosides at acidic pH. The sequence is that of Mammalian ependymin-related protein 1 (EPDR1) from Homo sapiens (Human).